A 186-amino-acid chain; its full sequence is UPF0398 protein LBUL_0921 (186 aa).

The protein belongs to the UPF0398 family.

This chain is UPF0398 protein LBUL_0921, found in Lactobacillus delbrueckii subsp. bulgaricus (strain ATCC BAA-365 / Lb-18).